The following is a 206-amino-acid chain: Glutathione S-transferase 1 (206 aa).

One can recognise a GST N-terminal domain in the interval 2–79 (PQYKLTYFDI…YLGRQFGLAG (78 aa)). Residues Tyr8, Trp39, Lys43, 49–51 (GQL), and 63–64 (QS) each bind glutathione. The region spanning 81–206 (TPMEEAQVDS…WIAERPKTPY (126 aa)) is the GST C-terminal domain.

The protein belongs to the GST superfamily. Sigma family.

The catalysed reaction is RX + glutathione = an S-substituted glutathione + a halide anion + H(+). Its function is as follows. Conjugation of reduced glutathione to a wide number of exogenous and endogenous hydrophobic electrophiles. Can also function as a GSH peroxidase. The chain is Glutathione S-transferase 1 (GST1) from Ascaris suum (Pig roundworm).